Reading from the N-terminus, the 439-residue chain is Proline--tRNA ligase (439 aa).

Belongs to the class-II aminoacyl-tRNA synthetase family. ProS type 2 subfamily. In terms of assembly, homodimer.

It localises to the cytoplasm. It carries out the reaction tRNA(Pro) + L-proline + ATP = L-prolyl-tRNA(Pro) + AMP + diphosphate. Catalyzes the attachment of proline to tRNA(Pro) in a two-step reaction: proline is first activated by ATP to form Pro-AMP and then transferred to the acceptor end of tRNA(Pro). The chain is Proline--tRNA ligase from Rhodopseudomonas palustris (strain BisB18).